Here is a 142-residue protein sequence, read N- to C-terminus: Putative pre-16S rRNA nuclease (142 aa).

Belongs to the YqgF nuclease family.

The protein localises to the cytoplasm. Its function is as follows. Could be a nuclease involved in processing of the 5'-end of pre-16S rRNA. The chain is Putative pre-16S rRNA nuclease from Nitratidesulfovibrio vulgaris (strain DSM 19637 / Miyazaki F) (Desulfovibrio vulgaris).